The following is a 429-amino-acid chain: Enolase (429 aa).

A (2R)-2-phosphoglycerate-binding site is contributed by glutamine 162. The active-site Proton donor is the glutamate 204. The Mg(2+) site is built by aspartate 241, glutamate 283, and aspartate 310. Lysine 335, arginine 364, serine 365, and lysine 386 together coordinate (2R)-2-phosphoglycerate. Lysine 335 functions as the Proton acceptor in the catalytic mechanism.

This sequence belongs to the enolase family. Requires Mg(2+) as cofactor.

Its subcellular location is the cytoplasm. The protein localises to the secreted. It localises to the cell surface. The enzyme catalyses (2R)-2-phosphoglycerate = phosphoenolpyruvate + H2O. It participates in carbohydrate degradation; glycolysis; pyruvate from D-glyceraldehyde 3-phosphate: step 4/5. Catalyzes the reversible conversion of 2-phosphoglycerate (2-PG) into phosphoenolpyruvate (PEP). It is essential for the degradation of carbohydrates via glycolysis. The polypeptide is Enolase (Mycobacterium tuberculosis (strain ATCC 25177 / H37Ra)).